The primary structure comprises 602 residues: MSTPLDHIRNFSIVAHIDHGKSTLADRLIQLTGGLDTREMKDQVLDSMDIERERGITIKAQTVRLSYKAKNGEDYVLNLIDTPGHVDFAYEVSRSLAACEGSLLVVDASQGVEAQTLANVYQAIDNNHEIVVVLNKIDLPAAEPERVKQQIEEVIGIDAAQAVHISAKTGIGIEDVLEAIVTQLPAPKEGDRNAPLKAMLVDSWYDSYLGVIVLVRIIDGVLKKGQTIRMMGTGAKYPVERTGVFTPKMVQVDELGPGELGFITASIKEVADTRVGDTITEDRRPTNKMLSGFKPAQPVVFCGLFPVDAADFEDLRAAMGKLRLNDASFSFEMETSAALGFGFRCGFLGLLHLEIIQERLEREFNLDLITTAPSVVYRLNMQDGSQKELHNPADMPDVVKINAIEEPWIRATIMTPDDYLGAIMKLCQERRGLQIDLTYVGPRAMITYDLPLNEVVFDFYDRLKSISKGYASFDYNLSDYREGDLVKMSILVNEEPVDALSMLVHRSAAEKRGRALCEKLKELIPQHMFKIPIQAAIGGRIVARETISALRKDVTAKCYGGDVTRKRKLLEKQKEGKKRMRQFGKVEIPQEAFIQALKMGDD.

In terms of domain architecture, tr-type G spans 6–188; it reads DHIRNFSIVA…AIVTQLPAPK (183 aa). GTP-binding positions include 18–23 and 135–138; these read DHGKST and NKID.

Belongs to the TRAFAC class translation factor GTPase superfamily. Classic translation factor GTPase family. LepA subfamily.

It localises to the cell inner membrane. The catalysed reaction is GTP + H2O = GDP + phosphate + H(+). Its function is as follows. Required for accurate and efficient protein synthesis under certain stress conditions. May act as a fidelity factor of the translation reaction, by catalyzing a one-codon backward translocation of tRNAs on improperly translocated ribosomes. Back-translocation proceeds from a post-translocation (POST) complex to a pre-translocation (PRE) complex, thus giving elongation factor G a second chance to translocate the tRNAs correctly. Binds to ribosomes in a GTP-dependent manner. The protein is Elongation factor 4 of Brucella anthropi (strain ATCC 49188 / DSM 6882 / CCUG 24695 / JCM 21032 / LMG 3331 / NBRC 15819 / NCTC 12168 / Alc 37) (Ochrobactrum anthropi).